A 663-amino-acid polypeptide reads, in one-letter code: Fructose-1,6-bisphosphatase class 3 1 (663 aa).

This sequence belongs to the FBPase class 3 family. Mn(2+) is required as a cofactor.

The catalysed reaction is beta-D-fructose 1,6-bisphosphate + H2O = beta-D-fructose 6-phosphate + phosphate. It functions in the pathway carbohydrate biosynthesis; gluconeogenesis. The chain is Fructose-1,6-bisphosphatase class 3 1 from Clostridium beijerinckii (strain ATCC 51743 / NCIMB 8052) (Clostridium acetobutylicum).